Here is a 517-residue protein sequence, read N- to C-terminus: Mucin-like protein 3 (517 aa).

A signal peptide spans 1–29 (MAQPVHSLCSAFGLQCCLLFLLASWGAGA). Topologically, residues 30-448 (TTFQEYQKTG…GENDSFPAWA (419 aa)) are extracellular. The interval 67 to 341 (SGQRPPELPK…PTENLGNTTL (275 aa)) is disordered. The span at 83-93 (QKRHCNTTRHS) shows a compositional bias: basic residues. Asparagine 88 carries an N-linked (GlcNAc...) asparagine glycan. Over residues 105-116 (TIDHKSSTDNHE) the composition is skewed to basic and acidic residues. Asparagine 124 carries N-linked (GlcNAc...) asparagine glycosylation. Polar residues predominate over residues 169–179 (RKSTTGKSTVT). Residues 180–190 (RKSDKTGRPLE) show a composition bias toward basic and acidic residues. Positions 194 to 213 (STLDKTSTSSHKTTTSFHNS) are enriched in low complexity. 3 stretches are compositionally biased toward polar residues: residues 214–225 (GNSQTKQKSTSF), 232–243 (ASKTTYKTTGTP), and 263–283 (TKTTKNIQETISANELTQSLA). Basic and acidic residues predominate over residues 305 to 317 (TENRERTANENKK). N-linked (GlcNAc...) asparagine glycosylation is present at asparagine 338. Residues 449-469 (IVIVVLVAVILLLVFLGLIFL) form a helical membrane-spanning segment. Residues 470–517 (VSYMMRTRRTLTQNTQYNDAEDEGGPNSYPVYLMEQQNLGMGQIPSPR) are Cytoplasmic-facing.

As to expression, detected in lung, esophagus, stomach, rectum, skin, cervix, testis, kidney, uterus and small intestine. Expressed in pancreas (at protein level).

It is found in the cell membrane. The protein resides in the cytoplasm. Functionally, may modulate NF-kappaB signaling and play a role in cell growth. This chain is Mucin-like protein 3, found in Homo sapiens (Human).